Reading from the N-terminus, the 272-residue chain is 1,4-dihydroxy-2-naphthoyl-CoA synthase (272 aa).

Substrate contacts are provided by residues Arg33, 72–76, Tyr84, 116–120, Thr142, Ser148, Tyr245, and Lys260; these read SGGDQ and YAIGG. 141-143 is a hydrogencarbonate binding site; the sequence is QTG. Over residues 253 to 264 the composition is skewed to basic and acidic residues; the sequence is GRDAFKEKRDPD. Residues 253–272 form a disordered region; it reads GRDAFKEKRDPDFDQFPKFP.

The protein belongs to the enoyl-CoA hydratase/isomerase family. MenB subfamily. It depends on hydrogencarbonate as a cofactor.

The enzyme catalyses 2-succinylbenzoyl-CoA + H(+) = 1,4-dihydroxy-2-naphthoyl-CoA + H2O. It participates in quinol/quinone metabolism; 1,4-dihydroxy-2-naphthoate biosynthesis; 1,4-dihydroxy-2-naphthoate from chorismate: step 6/7. The protein operates within quinol/quinone metabolism; menaquinone biosynthesis. Functionally, converts o-succinylbenzoyl-CoA (OSB-CoA) to 1,4-dihydroxy-2-naphthoyl-CoA (DHNA-CoA). This chain is 1,4-dihydroxy-2-naphthoyl-CoA synthase, found in Staphylococcus saprophyticus subsp. saprophyticus (strain ATCC 15305 / DSM 20229 / NCIMB 8711 / NCTC 7292 / S-41).